The primary structure comprises 696 residues: GPI mannosyltransferase 4 (696 aa).

6 helical membrane-spanning segments follow: residues 100 to 120 (WQLE…IYTL), 125 to 142 (NDYC…RFEI), 149 to 169 (SSWI…EMAM), 185 to 205 (NTVV…ESIS), 227 to 247 (AMST…LFGA), and 338 to 358 (YVHL…ASLG).

This sequence belongs to the glycosyltransferase 22 family. PIGZ subfamily.

It is found in the endoplasmic reticulum membrane. It participates in glycolipid biosynthesis; glycosylphosphatidylinositol-anchor biosynthesis. Functionally, mannosyltransferase involved in glycosylphosphatidylinositol-anchor biosynthesis. Transfers a fourth mannose to some trimannosyl-GPIs during GPI precursor assembly. This Drosophila melanogaster (Fruit fly) protein is GPI mannosyltransferase 4.